The following is a 223-amino-acid chain: MAKAHAFSKKVGWIELITGPMFAGKTAELIRRLHRLEYADVKYLVFKPRIDTRSTQNIKSRTGTSLPSIEVENAPEILSYIMSDNFDNEIKVIGIDEVQFFDDRICEVANILAENGFVVIISGLDKNFKGEPFGPIAKLFAYADKITKLTAICNECGAEATHSLRKIDGKYANYDDEIVKIGCQEFYSAVCRHHHKVPNRPYLNANSEEFIRFFKNKKRNKNV.

Residues 19 to 26 (GPMFAGKT) and 96 to 99 (DEVQ) contribute to the ATP site. The active-site Proton acceptor is Glu-97. Zn(2+) contacts are provided by Cys-153, Cys-156, Cys-191, and His-194.

The protein belongs to the thymidine kinase family. As to quaternary structure, homotetramer.

It localises to the cytoplasm. It catalyses the reaction thymidine + ATP = dTMP + ADP + H(+). This Ureaplasma urealyticum serovar 10 (strain ATCC 33699 / Western) protein is Thymidine kinase.